The primary structure comprises 511 residues: uncharacterized protein (511 aa).

The next 3 helical transmembrane spans lie at 33–53 (IICM…LAMA), 59–79 (IPVQ…AHIS), and 97–117 (VGRF…TTSI). Residues serine 147, serine 161, and serine 162 each carry the phosphoserine modification. The segment at 157–180 (REGNSSDEYLPPQSSRRDVSSEKP) is disordered. A run of 7 helical transmembrane segments spans residues 216–236 (LWLY…AGIF), 249–269 (IKGA…LGAF), 297–317 (MVES…EHLG), 332–352 (SLAF…SKVV), 412–432 (VLWG…YIML), 449–469 (IITS…SYDV), and 483–503 (IMNI…MFLI).

The protein to yeast YCR061W.

It is found in the endoplasmic reticulum membrane. This is an uncharacterized protein from Schizosaccharomyces pombe (strain 972 / ATCC 24843) (Fission yeast).